A 207-amino-acid polypeptide reads, in one-letter code: Small ribosomal subunit protein uS2 (207 aa).

It belongs to the universal ribosomal protein uS2 family.

This is Small ribosomal subunit protein uS2 from Nitrosopumilus maritimus (strain SCM1).